The following is a 148-amino-acid chain: MELNELRPAVGATKDRKRIGRGPGSGHGKTATKGHKGQKARSGGSVKPGFEGGQMPMQRRLPKRGFTPLTRKEYALVNVGQLEVFEAGSCIDVEALLNAGLIGGVKDGLKVLADGDLTKPLTVKAHKFSAKAKEKIAAAGGTVEEISL.

Residues M1–L61 form a disordered region. The segment covering T30–K39 has biased composition (basic residues).

The protein belongs to the universal ribosomal protein uL15 family. As to quaternary structure, part of the 50S ribosomal subunit.

In terms of biological role, binds to the 23S rRNA. The sequence is that of Large ribosomal subunit protein uL15 from Geobacter sulfurreducens (strain ATCC 51573 / DSM 12127 / PCA).